Here is a 525-residue protein sequence, read N- to C-terminus: Bifunctional purine biosynthesis protein PurH (525 aa).

In terms of domain architecture, MGS-like spans 1-149 (MSDPVIKRAL…KNNESVTVVT (149 aa)).

The protein belongs to the PurH family.

It carries out the reaction (6R)-10-formyltetrahydrofolate + 5-amino-1-(5-phospho-beta-D-ribosyl)imidazole-4-carboxamide = 5-formamido-1-(5-phospho-D-ribosyl)imidazole-4-carboxamide + (6S)-5,6,7,8-tetrahydrofolate. The enzyme catalyses IMP + H2O = 5-formamido-1-(5-phospho-D-ribosyl)imidazole-4-carboxamide. It functions in the pathway purine metabolism; IMP biosynthesis via de novo pathway; 5-formamido-1-(5-phospho-D-ribosyl)imidazole-4-carboxamide from 5-amino-1-(5-phospho-D-ribosyl)imidazole-4-carboxamide (10-formyl THF route): step 1/1. The protein operates within purine metabolism; IMP biosynthesis via de novo pathway; IMP from 5-formamido-1-(5-phospho-D-ribosyl)imidazole-4-carboxamide: step 1/1. This Prosthecochloris aestuarii (strain DSM 271 / SK 413) protein is Bifunctional purine biosynthesis protein PurH.